The primary structure comprises 431 residues: Chaperone SurA (431 aa).

An N-terminal signal peptide occupies residues 1-22 (MKLWKPTLISVLSALTLFNAHA). 2 PpiC domains span residues 173 to 271 (TVQY…KIDD) and 280 to 380 (VTEV…EVLD).

Its subcellular location is the periplasm. The enzyme catalyses [protein]-peptidylproline (omega=180) = [protein]-peptidylproline (omega=0). Its function is as follows. Chaperone involved in the correct folding and assembly of outer membrane proteins. Recognizes specific patterns of aromatic residues and the orientation of their side chains, which are found more frequently in integral outer membrane proteins. May act in both early periplasmic and late outer membrane-associated steps of protein maturation. In Vibrio cholerae serotype O1 (strain ATCC 39315 / El Tor Inaba N16961), this protein is Chaperone SurA.